The chain runs to 87 residues: Non-structural protein NS3 (87 aa).

It is found in the host nucleus. In terms of biological role, plays a role in viral DNA replication. This Mustela (ADV) protein is Non-structural protein NS3.